A 509-amino-acid chain; its full sequence is Autophagy-related protein 16 (509 aa).

WD repeat units lie at residues 223-262 (AHEGGCGSIVFEYNSGTLFTGGQDRAVKMWDTNSGTLIKS), 265-304 (GSLGNILDMAVTHDNKSVIAATSSNNLFVWDVSSGRVRHT), 307-347 (GHTD…CTNT), 349-388 (LFTSNCNAICLSIDGLTVFSGHMDGNLRLWDIQTGKLLSE), 391-430 (GHSSAVTSVSLSRNGNRILTSGRDNVHNVFDTRTLEICGT), 437-478 (RLAS…SILK), and 480-509 (QTSPILCCSWSGIGKPLASADKNGYVCTWT).

It belongs to the WD repeat ATG16 family.

May play a role in autophagy. The sequence is that of Autophagy-related protein 16 from Arabidopsis thaliana (Mouse-ear cress).